A 460-amino-acid chain; its full sequence is Serine incorporator 5 (460 aa).

At 1–36 (MCTPCCVSQLACCCGSAACSLCCGCCPKIKQSTSTR) the chain is on the extracellular side. Residues 37–57 (FMYALFFMLVTVTCVIMMSPT) form a helical membrane-spanning segment. The Cytoplasmic segment spans residues 58–89 (VEMAMREHIPFYSQMCQQLNAGENCSTLVGYS). Residues 90–110 (AVYKVCFGMACFFFFFAVFTI) traverse the membrane as a helical segment. At 111–124 (RVQNSTGCRAAVHN) the chain is on the extracellular side. A glycan (N-linked (GlcNAc...) asparagine) is linked at Asn-114. A helical membrane pass occupies residues 125–145 (GFWFFKFVALLACCAGGFFLP). At 146 to 156 (NQDQFLEVWRY) the chain is on the cytoplasmic side. The chain crosses the membrane as a helical span at residues 157–177 (VGAAGGFLFIIIQLMLLVQFA). Over 178 to 197 (HRWNQNWSSGATYNKLWYAA) the chain is Extracellular. Asn-183 carries N-linked (GlcNAc...) asparagine glycosylation. Residues 198–218 (LALVTLVLFSVAVGGMVFMFM) form a helical membrane-spanning segment. At 219–230 (YYTHPEACFLNK) the chain is on the cytoplasmic side. A helical transmembrane segment spans residues 231–251 (IFLGVNGGLCFIVSLLAISPC). The Extracellular portion of the chain corresponds to 252-259 (IQTFQPTS). A helical membrane pass occupies residues 260–280 (GLLQPAVITLYVMYLTFSALA). The Cytoplasmic portion of the chain corresponds to 281-311 (SKPIEMVEDEIKGNITVCVFPFKSGLKSDTN). The helical transmembrane segment at 312 to 332 (IVTGVGTAILFCCILYSCLIS) threads the bilayer. Residues 333–391 (TTKRSSAALQVYRNDMPENERARCCFCWVDDTEDYDDEKTSGGQNVKYDERDGTVYSYC) lie on the Extracellular side of the membrane. Residues 392–412 (FFHFVFFLGSLYVMMTVTNWF) form a helical membrane-spanning segment. Over 413 to 433 (HYDNAKIERLLEGSWSVFWIK) the chain is Cytoplasmic. Residues 434–454 (MASSWVCLFFYMWTLVVPMLF) form a helical membrane-spanning segment. Topologically, residues 455–460 (PQRFQA) are extracellular.

The protein belongs to the TDE1 family.

Its subcellular location is the cell membrane. The catalysed reaction is a 1,2-diacyl-sn-glycero-3-phospho-L-serine(in) = a 1,2-diacyl-sn-glycero-3-phospho-L-serine(out). It carries out the reaction a 1,2-diacyl-sn-glycero-3-phosphocholine(in) = a 1,2-diacyl-sn-glycero-3-phosphocholine(out). The enzyme catalyses a 1,2-diacyl-sn-glycero-3-phosphoethanolamine(in) = a 1,2-diacyl-sn-glycero-3-phosphoethanolamine(out). Its function is as follows. Restriction factor required to restrict infectivity of gammaretroviruses: acts by inhibiting an early step of viral infection. Impairs the penetration of the viral particle into the cytoplasm. Non-ATP-dependent, non-specific lipid transporter for phosphatidylserine, phosphatidylcholine, and phosphatidylethanolamine. Functions as a scramblase that flips lipids in both directions across the membrane. Phospholipid scrambling results in gammaretroviral surface exposure of phosphatidylserine and loss of membrane asymmetry, which leads to loss of infectivity. Enhances the incorporation of serine into phosphatidylserine and sphingolipids. This chain is Serine incorporator 5 (serinc5), found in Danio rerio (Zebrafish).